We begin with the raw amino-acid sequence, 883 residues long: Phosphoenolpyruvate carboxylase (883 aa).

Catalysis depends on residues histidine 138 and lysine 546.

It belongs to the PEPCase type 1 family. Mg(2+) serves as cofactor.

It carries out the reaction oxaloacetate + phosphate = phosphoenolpyruvate + hydrogencarbonate. In terms of biological role, forms oxaloacetate, a four-carbon dicarboxylic acid source for the tricarboxylic acid cycle. The polypeptide is Phosphoenolpyruvate carboxylase (Salmonella gallinarum (strain 287/91 / NCTC 13346)).